A 263-amino-acid polypeptide reads, in one-letter code: 4-hydroxy-tetrahydrodipicolinate reductase (263 aa).

NAD(+)-binding positions include 7–12 and Asp-33; that span reads GASGRM. NADP(+) is bound at residue Arg-34. Residues 96–98 and 120–123 contribute to the NAD(+) site; these read GTT and APNM. Catalysis depends on His-153, which acts as the Proton donor/acceptor. His-154 is a binding site for (S)-2,3,4,5-tetrahydrodipicolinate. Lys-157 functions as the Proton donor in the catalytic mechanism. 163-164 serves as a coordination point for (S)-2,3,4,5-tetrahydrodipicolinate; that stretch reads GT.

It belongs to the DapB family.

The protein resides in the cytoplasm. The catalysed reaction is (S)-2,3,4,5-tetrahydrodipicolinate + NAD(+) + H2O = (2S,4S)-4-hydroxy-2,3,4,5-tetrahydrodipicolinate + NADH + H(+). The enzyme catalyses (S)-2,3,4,5-tetrahydrodipicolinate + NADP(+) + H2O = (2S,4S)-4-hydroxy-2,3,4,5-tetrahydrodipicolinate + NADPH + H(+). It participates in amino-acid biosynthesis; L-lysine biosynthesis via DAP pathway; (S)-tetrahydrodipicolinate from L-aspartate: step 4/4. Catalyzes the conversion of 4-hydroxy-tetrahydrodipicolinate (HTPA) to tetrahydrodipicolinate. The sequence is that of 4-hydroxy-tetrahydrodipicolinate reductase from Ralstonia pickettii (strain 12J).